Here is a 101-residue protein sequence, read N- to C-terminus: Small ribosomal subunit protein uS14 (101 aa).

The protein belongs to the universal ribosomal protein uS14 family. As to quaternary structure, part of the 30S ribosomal subunit. Contacts proteins S3 and S10.

Functionally, binds 16S rRNA, required for the assembly of 30S particles and may also be responsible for determining the conformation of the 16S rRNA at the A site. The sequence is that of Small ribosomal subunit protein uS14 from Rhizobium etli (strain CIAT 652).